The primary structure comprises 534 residues: Acyl-CoA-binding domain-containing protein 5 (534 aa).

Residues 41-130 form the ACB domain; sequence HETRFEAAVK…MKKIIETMPM (90 aa). An an acyl-CoA-binding site is contributed by 52-61; it reads IQSLPKNGSF. The residue at position 63 (Pro-63) is a Phosphothreonine. Residues 72-76, Lys-98, and Tyr-117 contribute to the an acyl-CoA site; that span reads YSFYK. Phosphothreonine occurs at positions 137 and 172. The interval 181 to 225 is disordered; the sequence is TPNAKTVNGKAESSDSGAESEEEEAQEEVKGAEQSDNDKKMMKKS. Residues 190-219 are a coiled coil; that stretch reads KAESSDSGAESEEEEAQEEVKGAEQSDNDK. Phosphoserine occurs at positions 193, 194, 196, 200, 215, 279, and 313. Residues 207-225 are compositionally biased toward basic and acidic residues; sequence EEVKGAEQSDNDKKMMKKS. Basic and acidic residues predominate over residues 376 to 385; it reads EVKHGGEDGR. A disordered region spans residues 376–442; that stretch reads EVKHGGEDGR…ERWGSDRGSR (67 aa). The residue at position 400 (Thr-400) is a Phosphothreonine. Residue Ser-428 is modified to Phosphoserine. The segment covering 431 to 441 has biased composition (basic and acidic residues); it reads DGERWGSDRGS. A coiled-coil region spans residues 447-476; it reads EQIALVLMRLQEDMQNVLQRLQKLETLTAL. An N6-acetyllysine modification is found at Lys-469. A helical membrane pass occupies residues 506–526; the sequence is GVLTFAIIWPFIAQWLVYLYY.

The protein belongs to the ATG37 family.

The protein resides in the peroxisome membrane. Acyl-CoA binding protein which acts as the peroxisome receptor for pexophagy but is dispensable for aggrephagy and nonselective autophagy. Binds medium- and long-chain acyl-CoA esters. This Homo sapiens (Human) protein is Acyl-CoA-binding domain-containing protein 5 (ACBD5).